The chain runs to 449 residues: Hyaluronidase-1 (449 aa).

The first 39 residues, 1-39 (MKPFSPEVSPDPCPATAAHLLRTYTLFLTLLELAQGCRG), serve as a signal peptide directing secretion. 2 disulfide bridges follow: C58–C348 and C222–C236. N-linked (GlcNAc...) asparagine glycosylation is found at N85 and N114. E146 (proton donor) is an active-site residue. N-linked (GlcNAc...) asparagine glycans are attached at residues N231, N252, and N365. Intrachain disulfides connect C373–C384, C378–C433, and C435–C444. Residues 433-444 (CRCYRGWSGEWC) enclose the EGF-like domain.

It belongs to the glycosyl hydrolase 56 family.

The protein resides in the secreted. It is found in the lysosome. The catalysed reaction is Random hydrolysis of (1-&gt;4)-linkages between N-acetyl-beta-D-glucosamine and D-glucuronate residues in hyaluronate.. Its function is as follows. May have a role in promoting tumor progression. May block the TGFB1-enhanced cell growth. Overexpression of HYAL1 suppressed the growth rate of colon carcinoma cell tumors in an experimental model. In Rattus norvegicus (Rat), this protein is Hyaluronidase-1 (Hyal1).